The chain runs to 368 residues: S-adenosylmethionine decarboxylase proenzyme 1 (368 aa).

Catalysis depends on residues E9 and R12. The Schiff-base intermediate with substrate; via pyruvic acid role is filled by S69. S69 carries the post-translational modification Pyruvic acid (Ser); by autocatalysis. C83 (proton donor; for catalytic activity) is an active-site residue. Catalysis depends on proton acceptor; for processing activity residues S234 and H247.

It belongs to the eukaryotic AdoMetDC family. Pyruvate serves as cofactor. In terms of processing, is synthesized initially as an inactive proenzyme. Formation of the active enzyme involves a self-maturation process in which the active site pyruvoyl group is generated from an internal serine residue via an autocatalytic post-translational modification. Two non-identical subunits are generated from the proenzyme in this reaction, and the pyruvate is formed at the N-terminus of the alpha chain, which is derived from the carboxyl end of the proenzyme. The post-translation cleavage follows an unusual pathway, termed non-hydrolytic serinolysis, in which the side chain hydroxyl group of the serine supplies its oxygen atom to form the C-terminus of the beta chain, while the remainder of the serine residue undergoes an oxidative deamination to produce ammonia and the pyruvoyl group blocking the N-terminus of the alpha chain.

It catalyses the reaction S-adenosyl-L-methionine + H(+) = S-adenosyl 3-(methylsulfanyl)propylamine + CO2. It functions in the pathway amine and polyamine biosynthesis; S-adenosylmethioninamine biosynthesis; S-adenosylmethioninamine from S-adenosyl-L-methionine: step 1/1. This chain is S-adenosylmethionine decarboxylase proenzyme 1 (SAMDC1), found in Brassica juncea (Indian mustard).